We begin with the raw amino-acid sequence, 225 residues long: Phosphoserine phosphatase (225 aa).

Methionine 1 carries the post-translational modification N-acetylmethionine. Aspartate 20 acts as the Nucleophile in catalysis. Mg(2+) is bound by residues aspartate 20 and aspartate 22. 20–22 is an L-serine binding site; the sequence is DVD. The active-site Proton donor is the aspartate 22. An O-phospho-L-serine-binding site is contributed by methionine 52. A phosphate-binding site is contributed by glycine 53. L-serine-binding positions include 109 to 111 and lysine 158; that span reads SGG. Residues 109 to 111 and lysine 158 contribute to the O-phospho-L-serine site; that span reads SGG. Aspartate 179 provides a ligand contact to Mg(2+). Threonine 182 provides a ligand contact to O-phospho-L-serine. Threonine 182 provides a ligand contact to phosphate.

Belongs to the HAD-like hydrolase superfamily. SerB family. Homodimer. It depends on Mg(2+) as a cofactor.

The protein resides in the cytoplasm. Its subcellular location is the cytosol. It catalyses the reaction O-phospho-L-serine + H2O = L-serine + phosphate. The enzyme catalyses O-phospho-D-serine + H2O = D-serine + phosphate. It participates in amino-acid biosynthesis; L-serine biosynthesis; L-serine from 3-phospho-D-glycerate: step 3/3. Inhibited by calcium ions. In terms of biological role, catalyzes the last irreversible step in the biosynthesis of L-serine from carbohydrates, the dephosphorylation of O-phospho-L-serine to L-serine. L-serine can then be used in protein synthesis, to produce other amino acids, in nucleotide metabolism or in glutathione synthesis, or can be racemized to D-serine, a neuromodulator. May also act on O-phospho-D-serine. The sequence is that of Phosphoserine phosphatase from Homo sapiens (Human).